The sequence spans 210 residues: Guanylate kinase (210 aa).

In terms of domain architecture, Guanylate kinase-like spans 23–203; it reads GRVVVLSGPS…ACAELVSLLV (181 aa). ATP is bound at residue 30 to 37; the sequence is GPSAVGKS.

It belongs to the guanylate kinase family.

It localises to the cytoplasm. The catalysed reaction is GMP + ATP = GDP + ADP. In terms of biological role, essential for recycling GMP and indirectly, cGMP. The protein is Guanylate kinase (gmk) of Mycobacterium leprae (strain TN).